Consider the following 114-residue polypeptide: Hemerythrin (114 aa).

The Fe cation site is built by His-26, His-55, Glu-59, His-74, His-78, His-102, and Asp-107.

It belongs to the hemerythrin family. Homooctamer.

Functionally, hemerythrin is a respiratory protein in blood cells of certain marine worms. The oxygen-binding site in each chain contains two iron atoms. This is Hemerythrin from Phascolopsis gouldii (Peanut worm).